Here is a 290-residue protein sequence, read N- to C-terminus: Elongation factor Ts (290 aa).

An involved in Mg(2+) ion dislocation from EF-Tu region spans residues 82 to 85 (TDFV).

This sequence belongs to the EF-Ts family.

It localises to the cytoplasm. Its function is as follows. Associates with the EF-Tu.GDP complex and induces the exchange of GDP to GTP. It remains bound to the aminoacyl-tRNA.EF-Tu.GTP complex up to the GTP hydrolysis stage on the ribosome. This is Elongation factor Ts from Cellvibrio japonicus (strain Ueda107) (Pseudomonas fluorescens subsp. cellulosa).